We begin with the raw amino-acid sequence, 272 residues long: Shikimate dehydrogenase (NADP(+)) (272 aa).

Residues 14-16 and T61 contribute to the shikimate site; that span reads SKS. K65 functions as the Proton acceptor in the catalytic mechanism. Residue E77 participates in NADP(+) binding. Residues N86 and D102 each contribute to the shikimate site. NADP(+) contacts are provided by residues 126–130, 149–154, and M213; these read GAGGA and NRTQEK. Y215 lines the shikimate pocket. G237 serves as a coordination point for NADP(+).

This sequence belongs to the shikimate dehydrogenase family. As to quaternary structure, homodimer.

The enzyme catalyses shikimate + NADP(+) = 3-dehydroshikimate + NADPH + H(+). The protein operates within metabolic intermediate biosynthesis; chorismate biosynthesis; chorismate from D-erythrose 4-phosphate and phosphoenolpyruvate: step 4/7. Its function is as follows. Involved in the biosynthesis of the chorismate, which leads to the biosynthesis of aromatic amino acids. Catalyzes the reversible NADPH linked reduction of 3-dehydroshikimate (DHSA) to yield shikimate (SA). In Erwinia tasmaniensis (strain DSM 17950 / CFBP 7177 / CIP 109463 / NCPPB 4357 / Et1/99), this protein is Shikimate dehydrogenase (NADP(+)).